Here is a 572-residue protein sequence, read N- to C-terminus: Proline--tRNA ligase (572 aa).

Belongs to the class-II aminoacyl-tRNA synthetase family. ProS type 1 subfamily. Homodimer.

Its subcellular location is the cytoplasm. It catalyses the reaction tRNA(Pro) + L-proline + ATP = L-prolyl-tRNA(Pro) + AMP + diphosphate. Functionally, catalyzes the attachment of proline to tRNA(Pro) in a two-step reaction: proline is first activated by ATP to form Pro-AMP and then transferred to the acceptor end of tRNA(Pro). As ProRS can inadvertently accommodate and process non-cognate amino acids such as alanine and cysteine, to avoid such errors it has two additional distinct editing activities against alanine. One activity is designated as 'pretransfer' editing and involves the tRNA(Pro)-independent hydrolysis of activated Ala-AMP. The other activity is designated 'posttransfer' editing and involves deacylation of mischarged Ala-tRNA(Pro). The misacylated Cys-tRNA(Pro) is not edited by ProRS. This chain is Proline--tRNA ligase, found in Photorhabdus laumondii subsp. laumondii (strain DSM 15139 / CIP 105565 / TT01) (Photorhabdus luminescens subsp. laumondii).